The primary structure comprises 111 residues: Large ribosomal subunit protein uL24 (111 aa).

The interval 43–62 (TRHKKKDQTTKRAAKQSTGK) is disordered.

This sequence belongs to the universal ribosomal protein uL24 family. As to quaternary structure, part of the 50S ribosomal subunit.

Its function is as follows. One of two assembly initiator proteins, it binds directly to the 5'-end of the 23S rRNA, where it nucleates assembly of the 50S subunit. Functionally, one of the proteins that surrounds the polypeptide exit tunnel on the outside of the subunit. This is Large ribosomal subunit protein uL24 from Mycoplasma pneumoniae (strain ATCC 29342 / M129 / Subtype 1) (Mycoplasmoides pneumoniae).